The following is a 335-amino-acid chain: Cathepsin B (335 aa).

The first 19 residues, 1–19, serve as a signal peptide directing secretion; that stretch reads MWQLLATLSCLLVLTSARS. The propeptide at 20-79 is activation peptide; sequence SLHFPPLSDEMVNYVNKQNTTWKAGHNFYNVDLSYVKKLCGAILGGPKLPQRDAFAADMV. Intrachain disulfides connect C93–C122, C105–C150, C141–C207, C142–C146, C179–C211, and C187–C198. C108 is an active-site residue. N-linked (GlcNAc...) asparagine glycosylation is present at N192. An N6-acetyllysine modification is found at K220. Catalysis depends on residues H278 and N298. A propeptide spanning residues 333 to 335 is cleaved from the precursor; it reads HQH.

Belongs to the peptidase C1 family. Dimer of a heavy chain and a light chain cross-linked by a disulfide bond. Interacts with SRPX2. Directly interacts with SHKBP1.

It localises to the lysosome. It is found in the melanosome. The protein resides in the secreted. Its subcellular location is the extracellular space. The protein localises to the apical cell membrane. The enzyme catalyses Hydrolysis of proteins with broad specificity for peptide bonds. Preferentially cleaves -Arg-Arg-|-Xaa bonds in small molecule substrates (thus differing from cathepsin L). In addition to being an endopeptidase, shows peptidyl-dipeptidase activity, liberating C-terminal dipeptides.. Thiol protease which is believed to participate in intracellular degradation and turnover of proteins. Cleaves matrix extracellular phosphoglycoprotein MEPE. Involved in the solubilization of cross-linked TG/thyroglobulin in the thyroid follicle lumen. Has also been implicated in tumor invasion and metastasis. This Ovis aries (Sheep) protein is Cathepsin B (CTSB).